The following is a 1363-amino-acid chain: Vascular endothelial growth factor receptor 3 (1363 aa).

An N-terminal signal peptide occupies residues 1 to 24; it reads MQPGAALNLRLWLCLGLLQGLANG. Topologically, residues 25-775 are extracellular; that stretch reads YSMTPPTLNI…EGSEDKGSME (751 aa). 6 N-linked (GlcNAc...) asparagine glycosylation sites follow: Asn33, Asn104, Asn166, Asn251, Asn299, and Asn411. 7 consecutive Ig-like C2-type domains span residues 44 to 118, 151 to 213, 230 to 326, 331 to 415, 422 to 552, 555 to 671, and 678 to 764; these read GDSL…YIKA, KDSM…WGDQ, YDIQ…TEVI, PFIS…ISLE, PHIH…FYVT, PDGF…KYLS, and PRLT…ASVA. Intrachain disulfides connect Cys51–Cys111 and Cys158–Cys206. A disulfide bridge connects residues Cys252 and Cys310. 3 disulfide bridges follow: Cys445–Cys534, Cys466–Cys486, and Cys578–Cys653. Asn515, Asn527, Asn582, Asn594, Asn683, and Asn690 each carry an N-linked (GlcNAc...) asparagine glycan. Cys699 and Cys751 are disulfide-bonded. Asn758 carries N-linked (GlcNAc...) asparagine glycosylation. A helical membrane pass occupies residues 776–796; the sequence is IVILIGTGVIAVFFWVLLLLI. The Cytoplasmic segment spans residues 797-1363; it reads FCNMKRPAHA…GSTFFADSSY (567 aa). A phosphotyrosine; by SRC mark is found at Tyr830 and Tyr833. In terms of domain architecture, Protein kinase spans 845–1173; that stretch reads LHLGRVLGHG…DLVEILGDLL (329 aa). Residues 851 to 859 and Lys879 contribute to the ATP site; that span reads LGHGAFGKV. Asp1037 acts as the Proton acceptor in catalysis. The residue at position 1063 (Tyr1063) is a Phosphotyrosine; by autocatalysis and SRC. 4 positions are modified to phosphotyrosine; by autocatalysis: Tyr1068, Tyr1230, Tyr1231, and Tyr1265. Positions 1288 to 1330 are disordered; the sequence is ESRHRPEGSFSCKGPGQHMDIPRGHPDPQGRRRRPTQGAQGGK. Residues 1307–1317 are compositionally biased toward basic and acidic residues; that stretch reads DIPRGHPDPQG. 2 positions are modified to phosphotyrosine; by autocatalysis and SRC: Tyr1333 and Tyr1337. Tyr1363 is modified (phosphotyrosine; by autocatalysis).

This sequence belongs to the protein kinase superfamily. Tyr protein kinase family. CSF-1/PDGF receptor subfamily. In terms of assembly, interacts with VEGFC and VEGFD. Monomer in the absence of bound VEGFC or VEGFD. Homodimer in the presence of bound VEGFC or VEGFD. Can also form a heterodimer with KDR. Interacts with PTPN14; the interaction is enhanced by stimulation with VEGFC. Interacts with CRK, GRB2, PTK2/FAK1, SHC1, PIK3R1 and PTPN11/SHP-2. Identified in a complex with SRC and ITGB1. Autophosphorylated on tyrosine residues upon ligand binding. Autophosphorylation occurs in trans, i.e. one subunit of the dimeric receptor phosphorylates tyrosine residues on the other subunit. Phosphorylation in response to H(2)O(2) is mediated by a process that requires SRC and PRKCD activity. Phosphorylation at Tyr-1068 is required for autophosphorylation at additional tyrosine residues. Phosphorylation at Tyr-1063 and Tyr-1337 is important for interaction with CRK and subsequent activation of MAPK8. Phosphorylation at Tyr-1230, Tyr-1231 and Tyr-1337 is important for interaction with GRB2 and subsequent activation of the AKT1 and MAPK1/ERK2 and/or MAPK3/ERK1 signaling pathways. In response to endothelial cell adhesion onto collagen, can also be phosphorylated in the absence of FLT4 kinase activity by SRC. As to expression, expressed in adult lung and liver, and in fetal liver, brain, intestine and placenta.

Its subcellular location is the cell membrane. The protein localises to the cytoplasm. It localises to the nucleus. The enzyme catalyses L-tyrosyl-[protein] + ATP = O-phospho-L-tyrosyl-[protein] + ADP + H(+). Present in an inactive conformation in the absence of bound ligand. Binding of VEGFC or VEGFD leads to dimerization and activation by autophosphorylation on tyrosine residues. Functionally, tyrosine-protein kinase that acts as a cell-surface receptor for VEGFC and VEGFD, and plays an essential role in adult lymphangiogenesis and in the development of the vascular network and the cardiovascular system during embryonic development. Promotes proliferation, survival and migration of endothelial cells, and regulates angiogenic sprouting. Signaling by activated FLT4 leads to enhanced production of VEGFC, and to a lesser degree VEGFA, thereby creating a positive feedback loop that enhances FLT4 signaling. Modulates KDR signaling by forming heterodimers. Mediates activation of the MAPK1/ERK2, MAPK3/ERK1 signaling pathway, of MAPK8 and the JUN signaling pathway, and of the AKT1 signaling pathway. Phosphorylates SHC1. Mediates phosphorylation of PIK3R1, the regulatory subunit of phosphatidylinositol 3-kinase. Promotes phosphorylation of MAPK8 at 'Thr-183' and 'Tyr-185', and of AKT1 at 'Ser-473'. In Mus musculus (Mouse), this protein is Vascular endothelial growth factor receptor 3 (Flt4).